A 200-amino-acid chain; its full sequence is Cytochrome c biogenesis ATP-binding export protein CcmA (200 aa).

The ABC transporter domain maps to 2–200 (LDVIELDFDY…NKADYEEYHL (199 aa)). ATP is bound at residue 34 to 41 (GSNGAGKT).

This sequence belongs to the ABC transporter superfamily. CcmA exporter (TC 3.A.1.107) family. The complex is composed of two ATP-binding proteins (CcmA) and two transmembrane proteins (CcmB).

It localises to the cell inner membrane. It catalyses the reaction heme b(in) + ATP + H2O = heme b(out) + ADP + phosphate + H(+). Its function is as follows. Part of the ABC transporter complex CcmAB involved in the biogenesis of c-type cytochromes; once thought to export heme, this seems not to be the case, but its exact role is uncertain. Responsible for energy coupling to the transport system. This Legionella pneumophila (strain Lens) protein is Cytochrome c biogenesis ATP-binding export protein CcmA.